The primary structure comprises 508 residues: Pentatricopeptide repeat-containing protein At3g04130, mitochondrial (508 aa).

Residues 1–74 (MSWLIQNRIG…DSEDDVFKRL (74 aa)) constitute a mitochondrion transit peptide. 10 PPR repeats span residues 120 to 150 (SSDA…MRGD), 154 to 188 (TLNT…GLEK), 189 to 219 (NTES…LKSH), 223 to 257 (NAHT…GFRP), 258 to 292 (CVIS…GSPP), 293 to 327 (NSIT…GCKP), 328 to 363 (DSLF…GVSI), 364 to 398 (NTST…NLCN), 400 to 434 (DVHT…HHLS), and 436 to 470 (DEST…DITP).

Belongs to the PPR family. P subfamily.

The protein resides in the mitochondrion. This chain is Pentatricopeptide repeat-containing protein At3g04130, mitochondrial, found in Arabidopsis thaliana (Mouse-ear cress).